Consider the following 329-residue polypeptide: tRNA-modifying protein YgfZ (329 aa).

Folate contacts are provided by Trp32 and Trp190.

The protein belongs to the tRNA-modifying YgfZ family.

Its subcellular location is the cytoplasm. Folate-binding protein involved in regulating the level of ATP-DnaA and in the modification of some tRNAs. It is probably a key factor in regulatory networks that act via tRNA modification, such as initiation of chromosomal replication. This is tRNA-modifying protein YgfZ from Photobacterium profundum (strain SS9).